We begin with the raw amino-acid sequence, 1008 residues long: Envelopment polyprotein (1008 aa).

An N-terminal signal peptide occupies residues 1–17 (MVRTYLLLLLLCGPATP). The Lumenal portion of the chain corresponds to 18–394 (FFNHLMDVTR…NWANIHCFSK (377 aa)). Asparagine 34, asparagine 70, and asparagine 108 each carry an N-linked (GlcNAc...) asparagine; by host glycan. 8 disulfides stabilise this stretch: cysteine 138–cysteine 269, cysteine 156–cysteine 166, cysteine 206–cysteine 247, cysteine 216–cysteine 226, cysteine 233–cysteine 238, cysteine 292–cysteine 295, cysteine 299–cysteine 368, and cysteine 319–cysteine 324. N-linked (GlcNAc...) asparagine; by host glycosylation is present at asparagine 208. Residues 395–415 (EQVLILVAVSSLCILLLASVL) traverse the membrane as a helical segment. At 416–496 (RALKVIATFT…VRQKMFNLTR (81 aa)) the chain is on the cytoplasmic side. Residues 419–465 (KVIATFTWKIIKPFWWILSLLCRTCSKRLNKRAERLKESIHSLEEGL) form a golgi retention signal region. Positions 461-465 (LEEGL) are important for correct targeting of the glycoproteins to the Golgi complex but not for heterodimerization. An internal signal sequence for glycoprotein C region spans residues 497-513 (LSPVVVGMLCLACPVES). Disulfide bonds link cysteine 514/cysteine 555, cysteine 527/cysteine 537, cysteine 580/cysteine 677, cysteine 595/cysteine 789, cysteine 601/cysteine 650, cysteine 607/cysteine 657, cysteine 612/cysteine 639, cysteine 643/cysteine 648, cysteine 728/cysteine 742, cysteine 758/cysteine 771, cysteine 851/cysteine 924, and cysteine 861/cysteine 864. The Lumenal portion of the chain corresponds to 514-977 (CSDSISVTAS…GWFKASWLRA (464 aa)). The interval 601-607 (CHLMGAC) is fusion loop. The tract at residues 644–655 (GGALCQCFNMRP) is fusion loop. 2 N-linked (GlcNAc...) asparagine; by host glycosylation sites follow: asparagine 691 and asparagine 696. N-linked (GlcNAc...) asparagine; by host glycosylation is found at asparagine 912 and asparagine 949. The chain crosses the membrane as a helical span at residues 978–998 (IWAILGGTVSLIIGVVIIYMV). Residues 999–1008 (FTLCLKVKKS) lie on the Cytoplasmic side of the membrane.

This sequence belongs to the phlebovirus envelope glycoprotein family. Homodimer. Heterodimer with glycoprotein C. Homotrimer (postfusion). In terms of assembly, heterodimer with glycoprotein N. Homotrimer (postfusion). Post-translationally, specific enzymatic cleavages in vivo yield mature proteins including glycoprotein C and glycoprotein N. The cytoplasmic tail is Palmitoylated. In terms of processing, glycosylated. Contains principally poly-N-acetyllactosamine glycans. Post-translationally, glycosylated. Contains principally oligomannose-type glycans that can attach to host CD209/DC-SIGN. Palmitoylated.

It localises to the virion membrane. It is found in the host Golgi apparatus membrane. Its subcellular location is the host endoplasmic reticulum membrane. Functionally, structural component of the virion that interacts with glycoprotein C. It shields the hydrophobic fusion loops of the glycoprotein C, preventing premature fusion. The glycoprotein protrusions are arranged on an icosahedral lattice, with T=12 triangulation. They are able to attach the virion to the host cell receptor CD209/DC-SIGN and to promote fusion of membranes with the late endosome after endocytosis of the virion. Plays a role in the packaging of ribonucleoproteins during virus assembly. Structural component of the virion that interacts with glycoprotein N. Acts as a class II fusion protein that is activated upon acidification and subsequent repositioning of the glycoprotein N. The glycoprotein protrusions are arranged on an icosahedral lattice, with T=12 triangulation. They are able to attach the virion to the host cell receptor CD209/DC-SIGN and to promote fusion of membranes with the late endosome after endocytosis of the virion. In Homo sapiens (Human), this protein is Envelopment polyprotein (GP).